The chain runs to 315 residues: Cytochrome bo(3) ubiquinol oxidase subunit 2 (315 aa).

Positions M1–G24 are cleaved as a signal peptide. C25 carries the N-palmitoyl cysteine lipid modification. Residue C25 is the site of S-diacylglycerol cysteine attachment. The Periplasmic portion of the chain corresponds to C25–L50. A helical membrane pass occupies residues M51–K68. Residues Y69–V92 are Cytoplasmic-facing. Residues W93–T111 traverse the membrane as a helical segment. Over H112–H315 the chain is Periplasmic. A disordered region spans residues M288–H315. Residues E294 to H315 are compositionally biased toward basic and acidic residues.

Belongs to the cytochrome c oxidase subunit 2 family. In terms of assembly, heterooctamer of two A chains, two B chains, two C chains and two D chains.

The protein localises to the cell inner membrane. Its function is as follows. Cytochrome bo(3) ubiquinol terminal oxidase is the component of the aerobic respiratory chain of E.coli that predominates when cells are grown at high aeration. Has proton pump activity across the membrane in addition to electron transfer, pumping 2 protons/electron. The sequence is that of Cytochrome bo(3) ubiquinol oxidase subunit 2 (cyoA) from Escherichia coli O6:H1 (strain CFT073 / ATCC 700928 / UPEC).